We begin with the raw amino-acid sequence, 76 residues long: DNA-directed RNA polymerase subunit omega (76 aa).

The protein belongs to the RNA polymerase subunit omega family. The RNAP catalytic core consists of 2 alpha, 1 beta, 1 beta' and 1 omega subunit. When a sigma factor is associated with the core the holoenzyme is formed, which can initiate transcription.

It carries out the reaction RNA(n) + a ribonucleoside 5'-triphosphate = RNA(n+1) + diphosphate. In terms of biological role, promotes RNA polymerase assembly. Latches the N- and C-terminal regions of the beta' subunit thereby facilitating its interaction with the beta and alpha subunits. In Aquifex aeolicus (strain VF5), this protein is DNA-directed RNA polymerase subunit omega (rpoZ).